Here is a 122-residue protein sequence, read N- to C-terminus: Small ribosomal subunit protein uS13 (122 aa).

Residues 95-122 are disordered; the sequence is GLPVRGQRTHTNARTRKGPAKPIAGKKK.

Belongs to the universal ribosomal protein uS13 family. Part of the 30S ribosomal subunit. Forms a loose heterodimer with protein S19. Forms two bridges to the 50S subunit in the 70S ribosome.

Located at the top of the head of the 30S subunit, it contacts several helices of the 16S rRNA. In the 70S ribosome it contacts the 23S rRNA (bridge B1a) and protein L5 of the 50S subunit (bridge B1b), connecting the 2 subunits; these bridges are implicated in subunit movement. Contacts the tRNAs in the A and P-sites. The sequence is that of Small ribosomal subunit protein uS13 from Caulobacter vibrioides (strain ATCC 19089 / CIP 103742 / CB 15) (Caulobacter crescentus).